A 203-amino-acid chain; its full sequence is dTTP/UTP pyrophosphatase (203 aa).

The active-site Proton acceptor is D74.

This sequence belongs to the Maf family. YhdE subfamily. The cofactor is a divalent metal cation.

The protein localises to the cytoplasm. It carries out the reaction dTTP + H2O = dTMP + diphosphate + H(+). It catalyses the reaction UTP + H2O = UMP + diphosphate + H(+). Nucleoside triphosphate pyrophosphatase that hydrolyzes dTTP and UTP. May have a dual role in cell division arrest and in preventing the incorporation of modified nucleotides into cellular nucleic acids. The chain is dTTP/UTP pyrophosphatase from Treponema denticola (strain ATCC 35405 / DSM 14222 / CIP 103919 / JCM 8153 / KCTC 15104).